Reading from the N-terminus, the 158-residue chain is Transcription elongation factor GreA (158 aa).

Residues 47 to 73 (AEYHAAREKQSFIEGRIQELQAKLARA) adopt a coiled-coil conformation.

This sequence belongs to the GreA/GreB family.

In terms of biological role, necessary for efficient RNA polymerase transcription elongation past template-encoded arresting sites. The arresting sites in DNA have the property of trapping a certain fraction of elongating RNA polymerases that pass through, resulting in locked ternary complexes. Cleavage of the nascent transcript by cleavage factors such as GreA or GreB allows the resumption of elongation from the new 3'terminus. GreA releases sequences of 2 to 3 nucleotides. The protein is Transcription elongation factor GreA of Thermodesulfovibrio yellowstonii (strain ATCC 51303 / DSM 11347 / YP87).